Here is a 172-residue protein sequence, read N- to C-terminus: Phosphopantetheine adenylyltransferase (172 aa).

Substrate is bound at residue Thr14. ATP-binding positions include 14–15 and His22; that span reads TF. Substrate contacts are provided by Lys46, Leu78, and Arg92. Residues 93–95, Glu103, and 128–134 each bind ATP; these read GLR and WLYISST.

This sequence belongs to the bacterial CoaD family. As to quaternary structure, homohexamer. It depends on Mg(2+) as a cofactor.

The protein localises to the cytoplasm. It catalyses the reaction (R)-4'-phosphopantetheine + ATP + H(+) = 3'-dephospho-CoA + diphosphate. The protein operates within cofactor biosynthesis; coenzyme A biosynthesis; CoA from (R)-pantothenate: step 4/5. Reversibly transfers an adenylyl group from ATP to 4'-phosphopantetheine, yielding dephospho-CoA (dPCoA) and pyrophosphate. The polypeptide is Phosphopantetheine adenylyltransferase (Lawsonia intracellularis (strain PHE/MN1-00)).